Here is a 570-residue protein sequence, read N- to C-terminus: Pleckstrin homology domain-containing family D member 1 (570 aa).

Residues 1–13 are compositionally biased toward basic and acidic residues; that stretch reads MTTKTTPKELKAK. Positions 1-42 are disordered; that stretch reads MTTKTTPKELKAKKESKKKGSAPEPPKNGPPRTSPPNTIEKK. Residues 23 to 34 are compositionally biased toward pro residues; the sequence is PEPPKNGPPRTS. A PH domain is found at 83–192; the sequence is GVQNYGILMK…WLKALRSATK (110 aa). Positions 202–448 form a coiled coil; the sequence is ETMIRELENR…TGAQMTELQE (247 aa). Positions 542–551 are enriched in basic residues; sequence SKRGIRSSFR. The interval 542-570 is disordered; the sequence is SKRGIRSSFRKKTDSITTQPREKEPLMQL. A compositionally biased stretch (basic and acidic residues) spans 561–570; that stretch reads PREKEPLMQL.

This sequence belongs to the PLEKHD1 family.

The chain is Pleckstrin homology domain-containing family D member 1 from Caenorhabditis elegans.